Here is a 356-residue protein sequence, read N- to C-terminus: Ferrochelatase (356 aa).

Positions 214 and 295 each coordinate Fe cation.

This sequence belongs to the ferrochelatase family.

The protein localises to the cytoplasm. It catalyses the reaction heme b + 2 H(+) = protoporphyrin IX + Fe(2+). Its pathway is porphyrin-containing compound metabolism; protoheme biosynthesis; protoheme from protoporphyrin-IX: step 1/1. Its function is as follows. Catalyzes the ferrous insertion into protoporphyrin IX. The polypeptide is Ferrochelatase (Paraburkholderia xenovorans (strain LB400)).